We begin with the raw amino-acid sequence, 259 residues long: uncharacterized protein (259 aa).

A run of 3 helical transmembrane segments spans residues 55 to 75 (ILIL…SYLI), 85 to 105 (FPSI…FFSS), and 127 to 147 (FFFA…LCCG).

It localises to the membrane. This is an uncharacterized protein from Arabidopsis thaliana (Mouse-ear cress).